The sequence spans 747 residues: WD repeat-containing protein 91 (747 aa).

Residues 183–227 (QRTNQVQEENEVLRQKLFALQAEVHRLKKEEQQQEEAAALVQHKL) adopt a coiled-coil conformation. Position 256 is a phosphoserine (Ser256). Residues 265-278 (LLPQSKKSPSRLSP) are compositionally biased toward low complexity. Residues 265–358 (LLPQSKKSPS…SQTQCAEKKL (94 aa)) are disordered. Residues 283–299 (PQAQSSAKKDTFSSQAT) show a composition bias toward polar residues. Residue Ser288 is modified to Phosphoserine. Positions 332–343 (RLQDHGKERREL) are enriched in basic and acidic residues. Over residues 344-353 (LSTSSSQTQC) the composition is skewed to polar residues. WD repeat units follow at residues 406 to 445 (EHHS…QTKA), 448 to 488 (ISKS…NLCE), 511 to 555 (VCSA…QQLQ), 560 to 599 (PEPI…CAMS), 602 to 641 (AHCG…LKVS), 664 to 702 (VQVP…KVLE), and 709 to 747 (GHRA…AHKL).

Belongs to the WD repeat WDR91 family. In terms of assembly, interacts with WDR81; involved in early to late endosome cargo transport. Interacts with BECN1; negatively regulates the PI3 kinase/PI3K activity associated with endosomal membranes.

Its subcellular location is the early endosome membrane. It is found in the late endosome membrane. Functionally, functions as a negative regulator of the PI3 kinase/PI3K activity associated with endosomal membranes via BECN1, a core subunit of the PI3K complex. By modifying the phosphatidylinositol 3-phosphate/PtdInsP3 content of endosomal membranes may regulate endosome fusion, recycling, sorting and early to late endosome transport. It is for instance, required for the delivery of cargos like BST2/tetherin from early to late endosome and thereby participates indirectly to their degradation by the lysosome. May play a role in meiosis. The chain is WD repeat-containing protein 91 from Rattus norvegicus (Rat).